Reading from the N-terminus, the 1012-residue chain is Formate dehydrogenase 2 subunit alpha (cytochrome c-553) (1012 aa).

The tat-type signal signal peptide spans 1 to 33 (MKTTRRSFLKLVGVSVVGLSLGQLGFDLEDAQA). The 4Fe-4S Mo/W bis-MGD-type domain maps to 43–99 (AKEVGTVCPFCSVCCQVIAYVRNGKLVSTEGDPDFPVNEGALCAKGAALFSMYTNPH). Residues C50, C53, C57, and C85 each contribute to the [4Fe-4S] cluster site. Residue U189 coordinates W-bis(molybdopterin guanine dinucleotide). Residue U189 is a non-standard amino acid, selenocysteine. Positions 389, 391, 394, 424, and 426 each coordinate Ca(2+).

This sequence belongs to the prokaryotic molybdopterin-containing oxidoreductase family. As to quaternary structure, heterotrimer of cytochrome c3 FDH2C and formate dehydrogenase FDH2 alpha and beta subunits that forms the FdhABC(3) complex. [4Fe-4S] cluster serves as cofactor. The cofactor is W-bis(molybdopterin guanine dinucleotide). Predicted to be exported by the Tat system. The position of the signal peptide cleavage has not been experimentally proven.

The protein resides in the periplasm. The enzyme catalyses 2 Fe(III)-[cytochrome c553] + formate = 2 Fe(II)-[cytochrome c553] + CO2 + H(+). Its function is as follows. Alpha chain of the formate dehydrogenase (FDH) that catalyzes the reversible two-electron oxidation of formate to carbon dioxide. The alpha subunit of formate dehydrogenase forms the active site. This chain is Formate dehydrogenase 2 subunit alpha (cytochrome c-553), found in Nitratidesulfovibrio vulgaris (strain ATCC 29579 / DSM 644 / CCUG 34227 / NCIMB 8303 / VKM B-1760 / Hildenborough) (Desulfovibrio vulgaris).